The primary structure comprises 357 residues: Alpha-2-macroglobulin receptor-associated protein (357 aa).

The signal sequence occupies residues methionine 1–lysine 34. A disordered region spans residues glycine 32–glutamate 52. Residues tyrosine 35 to glutamate 52 are compositionally biased toward basic and acidic residues. Phosphoserine occurs at positions 50 and 135. Residues serine 219–serine 310 adopt a coiled-coil conformation. The LDL receptor binding stretch occupies residues arginine 237–arginine 353. Position 248 is a phosphothreonine (threonine 248). N-linked (GlcNAc...) asparagine glycosylation is present at asparagine 268. The short motif at histidine 354–leucine 357 is the Prevents secretion from ER element.

The protein belongs to the alpha-2-MRAP family. Interacts with the LRP1/alpha-2-macroglobulin receptor heavy and light chains; the interaction is transient and coincides with a reduction of ligand binding by the receptor. Interacts with LRP2/glycoprotein 330. Interacts with LRP1B; binding is followed by internalization and degradation. Interacts with LDLR. Interacts with SORL1. Interacts with LRP1; this interaction is followed by rapid internalization. In terms of processing, N-glycosylated.

It localises to the rough endoplasmic reticulum lumen. The protein resides in the endoplasmic reticulum-Golgi intermediate compartment lumen. The protein localises to the golgi apparatus. It is found in the cis-Golgi network. Its subcellular location is the golgi apparatus lumen. It localises to the endosome lumen. The protein resides in the cell surface. Functionally, molecular chaperone for LDL receptor-related proteins that may regulate their ligand binding activity along the secretory pathway. The polypeptide is Alpha-2-macroglobulin receptor-associated protein (Homo sapiens (Human)).